Consider the following 265-residue polypeptide: Hydroxyethylthiazole kinase (265 aa).

Met-50 provides a ligand contact to substrate. Arg-125 and Thr-171 together coordinate ATP. Residue Gly-198 participates in substrate binding.

This sequence belongs to the Thz kinase family. Requires Mg(2+) as cofactor.

The enzyme catalyses 5-(2-hydroxyethyl)-4-methylthiazole + ATP = 4-methyl-5-(2-phosphooxyethyl)-thiazole + ADP + H(+). The protein operates within cofactor biosynthesis; thiamine diphosphate biosynthesis; 4-methyl-5-(2-phosphoethyl)-thiazole from 5-(2-hydroxyethyl)-4-methylthiazole: step 1/1. Catalyzes the phosphorylation of the hydroxyl group of 4-methyl-5-beta-hydroxyethylthiazole (THZ). In Salmonella arizonae (strain ATCC BAA-731 / CDC346-86 / RSK2980), this protein is Hydroxyethylthiazole kinase.